Reading from the N-terminus, the 728-residue chain is Catalase-peroxidase (728 aa).

Residues 91–218 (WHSAGTYRTA…LAAVQMGLIY (128 aa)) constitute a cross-link (tryptophyl-tyrosyl-methioninium (Trp-Tyr) (with M-244)). H92 functions as the Proton acceptor in the catalytic mechanism. The tryptophyl-tyrosyl-methioninium (Tyr-Met) (with W-91) cross-link spans 218 to 244 (YVNPEGPDGNPDPVAAARDIRDTFARM). A heme b-binding site is contributed by H259.

This sequence belongs to the peroxidase family. Peroxidase/catalase subfamily. Homodimer or homotetramer. Heme b is required as a cofactor. Post-translationally, formation of the three residue Trp-Tyr-Met cross-link is important for the catalase, but not the peroxidase activity of the enzyme.

The enzyme catalyses H2O2 + AH2 = A + 2 H2O. It catalyses the reaction 2 H2O2 = O2 + 2 H2O. Its function is as follows. Bifunctional enzyme with both catalase and broad-spectrum peroxidase activity. This is Catalase-peroxidase from Burkholderia mallei (strain NCTC 10247).